Consider the following 316-residue polypeptide: MDLTNSTFLSNQLTPFLSFSREQWAELRKSVPLTLTEQDLKPLLGINEELSLDEVRTIYLPLVRLINYYIEERIQRQQVMNRFLGVNPDKVPYIISIAGSVAVGKSTSARILQSLLSQWPERRKVDLITTDGFLYPLAKLQQDNLLHKKGFPVSYDTARLVRFLADIKSGKPKVSAPVYSHLIYDIVPDQFDVVDQPDILILEGLNVLQTGDRSSQTFVSDFVDFSIYVDADEDLLKAWYISRFLKFRQSAFSDPNSYFKHYATLSEPEAISTAGRIWDEINGLNLRENILPTRERANLILTKGTDHAVELVKLRK.

99–106 (GSVAVGKS) provides a ligand contact to ATP.

This sequence belongs to the prokaryotic pantothenate kinase family.

The protein resides in the cytoplasm. It catalyses the reaction (R)-pantothenate + ATP = (R)-4'-phosphopantothenate + ADP + H(+). It functions in the pathway cofactor biosynthesis; coenzyme A biosynthesis; CoA from (R)-pantothenate: step 1/5. The sequence is that of Pantothenate kinase (coaA) from Pasteurella multocida (strain Pm70).